The following is an 842-amino-acid chain: Elongation factor 2 (842 aa).

Positions 17–346 (TNVRNMSVIA…MIVLHLPSPV (330 aa)) constitute a tr-type G domain. GTP is bound by residues 26–33 (AHVDHGKS), 158–161 (NKVD), and 213–215 (SGL). H699 is subject to Diphthamide.

This sequence belongs to the TRAFAC class translation factor GTPase superfamily. Classic translation factor GTPase family. EF-G/EF-2 subfamily.

The protein resides in the cytoplasm. The catalysed reaction is GTP + H2O = GDP + phosphate + H(+). Its function is as follows. Catalyzes the GTP-dependent ribosomal translocation step during translation elongation. During this step, the ribosome changes from the pre-translocational (PRE) to the post-translocational (POST) state as the newly formed A-site-bound peptidyl-tRNA and P-site-bound deacylated tRNA move to the P and E sites, respectively. Catalyzes the coordinated movement of the two tRNA molecules, the mRNA and conformational changes in the ribosome. The chain is Elongation factor 2 (EFT2) from Candida albicans (strain SC5314 / ATCC MYA-2876) (Yeast).